We begin with the raw amino-acid sequence, 292 residues long: Inhibitory synaptic factor 1 (292 aa).

Disordered regions lie at residues 1 to 25, 122 to 186, and 198 to 292; these read MNIRGTPDLGQPSDDPSSGGERERI, SDSV…ERVR, and CDDE…KGKN. Positions 23 to 63 form a coiled coil; the sequence is ERIRQRMKMVIGQLEDILRELKEVAKELREVVSQIDKLTSD. The span at 198 to 214 shows a compositional bias: acidic residues; it reads CDDEEGDGEEEAAEEEG. Residues 263–285 show a composition bias toward polar residues; it reads RNSSTQTVSDKSTQTVLPYTATR.

This sequence belongs to the INSYN1 family. Interacts with GPHN.

It localises to the postsynaptic density. Component of the protein machinery at the inhibitory synapses, probably acting as a scaffold. Inhibitory synapses dampen neuronal activity through postsynaptic hyperpolarization. This synaptic inhibition is fundamental for the functioning of the central nervous system, shaping and orchestrating the flow of information through neuronal networks to generate a precise neural code. The chain is Inhibitory synaptic factor 1 from Bos taurus (Bovine).